Here is a 212-residue protein sequence, read N- to C-terminus: Acyl-homoserine-lactone synthase (212 aa).

This sequence belongs to the autoinducer synthase family.

The enzyme catalyses a fatty acyl-[ACP] + S-adenosyl-L-methionine = an N-acyl-L-homoserine lactone + S-methyl-5'-thioadenosine + holo-[ACP] + H(+). In terms of biological role, required for the synthesis of OHHL (N-(3-oxohexanoyl)-L-homoserine lactone), an autoinducer molecule which binds to TraR and thus acts in the control of conjugal transfer. The chain is Acyl-homoserine-lactone synthase (traI) from Rhizobium radiobacter (Agrobacterium tumefaciens).